A 978-amino-acid polypeptide reads, in one-letter code: Glycine dehydrogenase (decarboxylating) (978 aa).

Position 726 is an N6-(pyridoxal phosphate)lysine (Lys-726).

This sequence belongs to the GcvP family. The glycine cleavage system is composed of four proteins: P, T, L and H. It depends on pyridoxal 5'-phosphate as a cofactor.

It catalyses the reaction N(6)-[(R)-lipoyl]-L-lysyl-[glycine-cleavage complex H protein] + glycine + H(+) = N(6)-[(R)-S(8)-aminomethyldihydrolipoyl]-L-lysyl-[glycine-cleavage complex H protein] + CO2. Functionally, the glycine cleavage system catalyzes the degradation of glycine. The P protein binds the alpha-amino group of glycine through its pyridoxal phosphate cofactor; CO(2) is released and the remaining methylamine moiety is then transferred to the lipoamide cofactor of the H protein. The polypeptide is Glycine dehydrogenase (decarboxylating) (Paraburkholderia phytofirmans (strain DSM 17436 / LMG 22146 / PsJN) (Burkholderia phytofirmans)).